We begin with the raw amino-acid sequence, 74 residues long: Translation initiation factor IF-1 (74 aa).

The S1-like domain maps to 1-73 (MSNKEDIIKM…TKGRIVYRKK (73 aa)).

The protein belongs to the IF-1 family. As to quaternary structure, component of the 30S ribosomal translation pre-initiation complex which assembles on the 30S ribosome in the order IF-2 and IF-3, IF-1 and N-formylmethionyl-tRNA(fMet); mRNA recruitment can occur at any time during PIC assembly.

The protein resides in the cytoplasm. Functionally, one of the essential components for the initiation of protein synthesis. Stabilizes the binding of IF-2 and IF-3 on the 30S subunit to which N-formylmethionyl-tRNA(fMet) subsequently binds. Helps modulate mRNA selection, yielding the 30S pre-initiation complex (PIC). Upon addition of the 50S ribosomal subunit IF-1, IF-2 and IF-3 are released leaving the mature 70S translation initiation complex. In Thermosipho melanesiensis (strain DSM 12029 / CIP 104789 / BI429), this protein is Translation initiation factor IF-1.